The sequence spans 174 residues: MTSQQIDAEALYQSLVAQLRTRMAGTPAGDWSVAGIVSGGAWIAARLALDLGLREYGIVNVALHRDDYAKKGLHAQAQPTTLPFEVEERRILLVDDVLATGRTIRAAINELFDYGRPAAVELAVLVDRGERQLPIAPDYIGERIALAADESLVLRQEGEGASARFTFTREPKTA.

Residues 38-39 (SG), 95-103 (DDVLATGRT), and Arg-128 contribute to the substrate site. Residues 91–103 (ILLVDDVLATGRT) carry the PRPP-binding motif.

The protein belongs to the purine/pyrimidine phosphoribosyltransferase family. PyrR subfamily.

It carries out the reaction UMP + diphosphate = 5-phospho-alpha-D-ribose 1-diphosphate + uracil. Its function is as follows. Regulates the transcription of the pyrimidine nucleotide (pyr) operon in response to exogenous pyrimidines. In terms of biological role, also displays a weak uracil phosphoribosyltransferase activity which is not physiologically significant. In Ralstonia nicotianae (strain ATCC BAA-1114 / GMI1000) (Ralstonia solanacearum), this protein is Bifunctional protein PyrR.